The primary structure comprises 910 residues: Eukaryotic translation initiation factor 3 subunit C (910 aa).

A disordered region spans residues 1-21 (MSRFFANGSESESESSEEEIQ). Positions 11–20 (SESESSEEEI) are enriched in acidic residues. A phosphoserine mark is found at S34, S165, S176, and S185. The interval 157-281 (FREAPDQESE…KRAEDDEDGE (125 aa)) is disordered. Residues 162–186 (DQESEAEDEVVALESDGGDAGDDSD) show a composition bias toward acidic residues. A compositionally biased stretch (low complexity) spans 193–207 (EAAPKAVKSAPAKAA). A compositionally biased stretch (acidic residues) spans 209-235 (ADDDDSDDSIDWDSDSESETESSDDEN). Positions 240–268 (MRERFLKRTTEKEEKDDDKRKDKRKEQKT) are enriched in basic and acidic residues. The region spanning 639–815 (FHMHINLELL…ETVGMHRSEP (177 aa)) is the PCI domain. Residues 847–910 (FFQRGNMGNR…QQQVQTIDEE (64 aa)) form a disordered region. Residues 862–874 (NRNQNNQGGNWLG) are compositionally biased toward low complexity. Residues 882 to 891 (RNRNQRGHHK) show a composition bias toward basic residues. Over residues 895–910 (DRQQQQQQQVQTIDEE) the composition is skewed to low complexity.

It belongs to the eIF-3 subunit C family. As to quaternary structure, component of the eukaryotic translation initiation factor 3 (eIF-3) complex. The eIF-3 complex interacts with pix.

Its subcellular location is the cytoplasm. Functionally, component of the eukaryotic translation initiation factor 3 (eIF-3) complex, which is involved in protein synthesis of a specialized repertoire of mRNAs and, together with other initiation factors, stimulates binding of mRNA and methionyl-tRNAi to the 40S ribosome. The eIF-3 complex specifically targets and initiates translation of a subset of mRNAs involved in cell proliferation. In Drosophila sechellia (Fruit fly), this protein is Eukaryotic translation initiation factor 3 subunit C.